The chain runs to 899 residues: MVSLSNQTRFSFHPNNLVVSEKRRLGISGVNFPRKIKLKITCFAAERPRQEKQKKKSQSQSTSDAEAGVDPVGFLTRLGIADRIFAQFLRERHKALKDLKDEIFKRHFDFRDFASGFELLGMHRHMEHRVDFMDWGPGSRYGAIIGDFNGWSPTENAAREGLFGHDDYGYWFIILEDKLREGEEPDELYFQQYNYVDDYDKGDSGVSAEEIFQKANDEYWEPGEDRFIKNRFEVPAKLYEQMFGPNSPQTLEELGDIPDAETRYKQWKEEHKDDPPSNLPPCDIIDKGQGKPYDIFNVVTSPEWTKKFYEKEPPIPYWLETRKGRKAWLQKYIPAVPHGSKYRLYFNTPDGPLERVPAWATYVQPEDEGKQAYAIHWEPSPEAAYKWKYSKPKVPESLRIYECHVGISGSEPKVSTFEEFTKKVLPHVKRAGYNAIQLIGVPEHKDYFTVGYRVTNFFAASSRYGTPDDFKRLVDEAHGLGLLVFLDIVHSYAAADQMVGLSLFDGSNDCYFHYGKRGHHKHWGTRMFKYGDLDVLHFLISNLNWWITEYQVDGYQFHSLASMIYTHNGFASFNNDLDDYCNQYVDRDALMYLILANEILHVQHPNIITIAEDATYYPGLCEPVSQGGLGFDYYVNLSASEMWVSLLDNVPDNEWSMSKIVSTLVANKEYADKMLSYAENHNQSISGGRSFAEILFGGVDNGSPGGKELLDRGISLHKMIRLITFTSGGRAYLNFMGNEFGHPERVEFPTQSNNFSFSLANRRWDLLESGVHHHLFSFDKELMDLDKSKGILSRGLPSIHHVNDANMVISFSRGPFLFIFNFHPSNSYEKYDVGVEEAGEYTMILNSDEVKYGGQGIVTEDHYLQRSISKRIDGQRNCLEVFLPSRTAQVYKLTRILRI.

Residues 1 to 49 (MVSLSNQTRFSFHPNNLVVSEKRRLGISGVNFPRKIKLKITCFAAERPR) constitute a chloroplast transit peptide. Residues 47–67 (RPRQEKQKKKSQSQSTSDAEA) form a disordered region. E612 serves as the catalytic Proton donor.

This sequence belongs to the glycosyl hydrolase 13 family. GlgB subfamily. In terms of assembly, monomer. As to expression, mostly expressed in flowers and inflorescence, and, to a lower extent, in seedlings, roots, stems, leaves, siliques and seeds.

The protein resides in the plastid. The protein localises to the chloroplast stroma. It is found in the amyloplast. The enzyme catalyses Transfers a segment of a (1-&gt;4)-alpha-D-glucan chain to a primary hydroxy group in a similar glucan chain.. It functions in the pathway glycan biosynthesis; starch biosynthesis. Catalyzes the formation of the alpha-1,6-glucosidic linkages in starch by scission of a 1,4-alpha-linked oligosaccharide from growing alpha-1,4-glucan chains and the subsequent attachment of the oligosaccharide to the alpha-1,6 position. Essential during embryogenesis. This Arabidopsis thaliana (Mouse-ear cress) protein is 1,4-alpha-glucan-branching enzyme 3, chloroplastic/amyloplastic (SBE3).